The primary structure comprises 748 residues: Photosystem I P700 chlorophyll a apoprotein A1 (748 aa).

8 helical membrane-spanning segments follow: residues 69–92 (IFSA…FHGA), 155–178 (LYVT…FHYH), 194–218 (LNHH…HVSL), 290–308 (VAHH…GHMY), 345–368 (WHAN…HHMY), 384–410 (LSLF…IYMV), 432–454 (AIIS…LYIH), and 529–547 (FMVH…LILL). Residues Cys571 and Cys580 each coordinate [4Fe-4S] cluster. Transmembrane regions (helical) follow at residues 587–608 (HVFL…HFSW) and 662–684 (LSAY…MFLF). His673 contributes to the chlorophyll a' binding site. Chlorophyll a is bound by residues Met681 and Tyr689. Phylloquinone is bound at residue Trp690. Residues 722–742 (AVGVAHYLLGGIATTWAFFLA) form a helical membrane-spanning segment.

It belongs to the PsaA/PsaB family. In terms of assembly, the PsaA/B heterodimer binds the P700 chlorophyll special pair and subsequent electron acceptors. PSI consists of a core antenna complex that captures photons, and an electron transfer chain that converts photonic excitation into a charge separation. The eukaryotic PSI reaction center is composed of at least 11 subunits. It depends on P700 is a chlorophyll a/chlorophyll a' dimer, A0 is one or more chlorophyll a, A1 is one or both phylloquinones and FX is a shared 4Fe-4S iron-sulfur center. as a cofactor.

It localises to the plastid. The protein resides in the chloroplast thylakoid membrane. It carries out the reaction reduced [plastocyanin] + hnu + oxidized [2Fe-2S]-[ferredoxin] = oxidized [plastocyanin] + reduced [2Fe-2S]-[ferredoxin]. Its function is as follows. PsaA and PsaB bind P700, the primary electron donor of photosystem I (PSI), as well as the electron acceptors A0, A1 and FX. PSI is a plastocyanin/cytochrome c6-ferredoxin oxidoreductase, converting photonic excitation into a charge separation, which transfers an electron from the donor P700 chlorophyll pair to the spectroscopically characterized acceptors A0, A1, FX, FA and FB in turn. Oxidized P700 is reduced on the lumenal side of the thylakoid membrane by plastocyanin or cytochrome c6. In Cyanidioschyzon merolae (strain NIES-3377 / 10D) (Unicellular red alga), this protein is Photosystem I P700 chlorophyll a apoprotein A1.